We begin with the raw amino-acid sequence, 217 residues long: MATVEPETTPTTNPPPAEEEKTESNQEVANPEHYIKHPLQNRWALWFFKNDKSKTWQANLRLISKFDTVEDFWALYNHIQLSSNLMPGCDYSLFKDGIEPMWEDEKNKRGGRWLITLNKQQRRSDLDRFWLETLLCLIGESFDDYSDDVCGAVVNVRAKGDKIAIWTTECENRDAVTHIGRVYKERLGLPPKIVIGYQSHADTATKSGSTTKNRFVV.

The segment covering 1–11 has biased composition (low complexity); sequence MATVEPETTPT. The segment at 1–27 is disordered; the sequence is MATVEPETTPTTNPPPAEEEKTESNQE. Alanine 2 is modified (N-acetylalanine). Threonine 22 carries the phosphothreonine modification. The tract at residues 37-40 is EIF4EBP1/2/3 binding; that stretch reads HPLQ. 56 to 57 contributes to the mRNA binding site; that stretch reads WQ. The segment at 73–77 is EIF4EBP1/2/3 binding; sequence WALYN. Residue 102–103 participates in mRNA binding; sequence WE. Positions 132–139 are EIF4EBP1/2/3 binding; that stretch reads ETLLCLIG. Residues 157 to 162 and 205 to 207 contribute to the mRNA site; these read RAKGDK and TKS. Serine 209 bears the Phosphoserine; by PKC and MKNK2 mark.

Belongs to the eukaryotic initiation factor 4E family. In terms of assembly, eIF4F is a multi-subunit complex, the composition of which varies with external and internal environmental conditions. It is composed of at least EIF4A, EIF4E and EIF4G1/EIF4G3. EIF4E is also known to interact with other partners. Interacts with EIF4ENIF1/4E-T; promotes recruitment to P-bodies and import into the nucleus. Hypophosphorylated EIF4EBP1, EIF4EBP2 and EIF4EBP3 compete with EIF4G1/EIF4G3 to interact with EIF4E; insulin stimulated MAP-kinase (MAPK1 and MAPK3) phosphorylation of EIF4EBP1 causes dissociation of the complex allowing EIF4G1/EIF4G3 to bind and consequent initiation of translation. Interacts mutually exclusive with EIF4A1 or EIF4A2. Interacts with NGDN and PIWIL2. Component of the CYFIP1-EIF4E-FMR1 complex composed of CYFIP, EIF4E and FMR1. Interacts directly with CYFIP1. Interacts with CLOCK. Binds to MKNK2 in nucleus. Interacts with LIMD1, WTIP and AJUBA. Interacts with APOBEC3G in an RNA-dependent manner. Interacts with LARP1. Interacts with METTL3. Interacts with RBM24; this interaction prevents EIF4E from binding to p53/TP53 mRNA and inhibits the assembly of translation initiation complex. Interacts with DDX3X; interaction is direct and in an RNA-independent manner; this interaction enhances EIF4E cap-binding ability and is required for the repression of cap-dependent translation and the increase of IRES-mediated translation. DDX3X competes with EIF4G1 for interaction with EIF4E. Interacts with EIF4G1; which in a mutual exclusive interaction associates either with EIF1 or with EIF4E on a common binding site. Interacts with BTG4 and CNOT7. Interacts with LRPPRC (via N-terminus); the interaction promotes association of EIF4E with 4ESE-containing mRNAs. Interacts with mRNA cleavage enzyme CPSF3 and its cofactor CPSF1. Interacts (via RING-type zinc finger) with PML; the interaction results in conformational changes of both interacting proteins and reduces EIF4E affinity for the 5' m7G cap of mRNA, thus reducing EIF4E-mediated mRNA nuclear export. Interacts with homeobox protein HHEX/PRH; the interaction inhibits EIF4E-mediated mRNA nuclear export. Interacts with homeobox protein HOXA9; the interaction positively regulates EIF4E-mediated mRNA nuclear export. Interacts with homeobox protein EMX2. (Microbial infection) Interacts with murine norovirus viral genome-linked protein; this interaction plays a role in translation of viral proteins. In terms of processing, phosphorylation increases the ability of the protein to bind to mRNA caps and to form the eIF4F complex. Phosphorylation also enhances its mRNA transport function. Phosphorylation at Ser-209 is not essential for protein synthesis.

The protein localises to the cytoplasm. Its subcellular location is the P-body. It is found in the stress granule. The protein resides in the nucleus. It localises to the nucleus speckle. The protein localises to the nuclear body. In terms of biological role, acts in the cytoplasm to initiate and regulate protein synthesis and is required in the nucleus for export of a subset of mRNAs from the nucleus to the cytoplasm which promotes processes such as RNA capping, processing and splicing. Component of the protein complex eIF4F, which is involved in the recognition of the mRNA cap, ATP-dependent unwinding of 5'-terminal secondary structure and recruitment of mRNA to the ribosome. This protein recognizes and binds the 7-methylguanosine (m7G)-containing mRNA cap during an early step in the initiation of protein synthesis and facilitates ribosome binding by inducing the unwinding of the mRNAs secondary structures. Together with EIF4G1, antagonizes the scanning promoted by EIF1-EIF4G1 and is required for TISU translation, a process where the TISU element recognition makes scanning unnecessary. In addition to its role in translation initiation, also acts as a regulator of translation and stability in the cytoplasm. Component of the CYFIP1-EIF4E-FMR1 complex which binds to the mRNA cap and mediates translational repression: in the complex, EIF4E mediates the binding to the mRNA cap. Component of a multiprotein complex that sequesters and represses translation of proneurogenic factors during neurogenesis. In P-bodies, component of a complex that mediates the storage of translationally inactive mRNAs in the cytoplasm and prevents their degradation. May play an important role in spermatogenesis through translational regulation of stage-specific mRNAs during germ cell development. As well as its roles in translation, also involved in mRNA nucleocytoplasmic transport. Its role in mRNA export from the nucleus to the cytoplasm relies on its ability to bind the m7G cap of RNAs and on the presence of the 50-nucleotide EIF4E sensitivity element (4ESE) in the 3'UTR of sensitive transcripts. Interaction with the 4ESE is mediated by LRPPRC which binds simultaneously to both EIF4E and the 4ESE, thereby acting as a platform for assembly for the RNA export complex. EIF4E-dependent mRNA export is independent of ongoing protein or RNA synthesis and is also NFX1-independent but is XPO1-dependent with LRPPRC interacting with XPO1 to form an EIF4E-dependent mRNA export complex. Alters the composition of the cytoplasmic face of the nuclear pore to promote RNA export by reducing RANBP2 expression, relocalizing nucleoporin NUP214 and increasing expression of RANBP1 and RNA export factors DDX19 and GLE1. Promotes the nuclear export of cyclin CCND1 mRNA. Promotes the nuclear export of NOS2/iNOS mRNA. Promotes the nuclear export of MDM2 mRNA. Also promotes the export of additional mRNAs, including others involved in the cell cycle. In the nucleus, binds to capped splice factor-encoding mRNAs and stimulates their nuclear export to enhance splice factor production by increasing their cytoplasmic availability to the translation machinery. May also regulate splicing through interaction with the spliceosome in an RNA and m7G cap-dependent manner. Also binds to some pre-mRNAs and may play a role in their recruitment to the spliceosome. Promotes steady-state capping of a subset of coding and non-coding RNAs by mediating nuclear export of capping machinery mRNAs including RNMT, RNGTT and RAMAC to enhance their translation. Stimulates mRNA 3'-end processing by promoting the expression of several core cleavage complex factors required for mRNA cleavage and polyadenylation, and may also have a direct effect through its interaction with the CPSF3 cleavage enzyme. Rescues cells from apoptosis by promoting activation of serine/threonine-protein kinase AKT1 through mRNA export of NBS1 which potentiates AKT1 phosphorylation and also through mRNA export of AKT1 effectors, allowing for increased production of these proteins. The chain is Eukaryotic translation initiation factor 4E from Mus musculus (Mouse).